The chain runs to 350 residues: Galactokinase (350 aa).

Residue 14 to 17 coordinates substrate; sequence EHTD. ATP-binding positions include serine 46 and 96 to 102; that span reads GAGLSSS. Mg(2+)-binding residues include serine 102 and glutamate 134. Aspartate 146 serves as the catalytic Proton acceptor. Tyrosine 196 contributes to the substrate binding site.

It belongs to the GHMP kinase family. GalK subfamily.

Its subcellular location is the cytoplasm. The enzyme catalyses alpha-D-galactose + ATP = alpha-D-galactose 1-phosphate + ADP + H(+). It functions in the pathway carbohydrate metabolism; galactose metabolism. In terms of biological role, catalyzes the transfer of the gamma-phosphate of ATP to D-galactose to form alpha-D-galactose-1-phosphate (Gal-1-P). This is Galactokinase from Thermotoga petrophila (strain ATCC BAA-488 / DSM 13995 / JCM 10881 / RKU-1).